Here is a 349-residue protein sequence, read N- to C-terminus: Glycine-rich cell wall structural protein (349 aa).

A signal peptide spans 1 to 23; that stretch reads MGKVSFGFLGLMLVVVVIGVVEC.

It is found in the secreted. The protein resides in the cell wall. In terms of biological role, responsible for plasticity of the cell wall. This chain is Glycine-rich cell wall structural protein, found in Arabidopsis thaliana (Mouse-ear cress).